Here is a 333-residue protein sequence, read N- to C-terminus: DNA-directed RNA polymerase subunit alpha (333 aa).

Residues 1-251 (MEKLTKIKHR…AHFQTIGDLT (251 aa)) are alpha N-terminal domain (alpha-NTD). The segment at 272–333 (DMEIRLLNLS…KLNEYGKLKN (62 aa)) is alpha C-terminal domain (alpha-CTD).

The protein belongs to the RNA polymerase alpha chain family. As to quaternary structure, homodimer. The RNAP catalytic core consists of 2 alpha, 1 beta, 1 beta' and 1 omega subunit. When a sigma factor is associated with the core the holoenzyme is formed, which can initiate transcription.

The enzyme catalyses RNA(n) + a ribonucleoside 5'-triphosphate = RNA(n+1) + diphosphate. In terms of biological role, DNA-dependent RNA polymerase catalyzes the transcription of DNA into RNA using the four ribonucleoside triphosphates as substrates. This is DNA-directed RNA polymerase subunit alpha from Mycoplasmopsis synoviae (strain 53) (Mycoplasma synoviae).